The chain runs to 349 residues: Peptide transport system ATP-binding protein SapD (349 aa).

One can recognise an ABC transporter domain in the interval methionine 1–isoleucine 259. ATP is bound at residue glycine 40–serine 47.

This sequence belongs to the ABC transporter superfamily.

It is found in the cell inner membrane. Functionally, involved in a peptide intake transport system that plays a role in the resistance to antimicrobial peptides. The polypeptide is Peptide transport system ATP-binding protein SapD (sapD) (Haemophilus influenzae (strain ATCC 51907 / DSM 11121 / KW20 / Rd)).